Here is a 123-residue protein sequence, read N- to C-terminus: MWVGLGGGVGSLGRWWIGRIVGEYHHGAFPLGTFLINISGAFVIGYLSVLFGVDWHDRYGTMLNAGVLTGILGGYTTFSSMQLDAVKLSHKGQGGLAVFYLVASVLSGLFAAWLGAMLAHLQG.

The next 3 membrane-spanning stretches (helical) occupy residues 33 to 53, 59 to 79, and 98 to 118; these read TFLI…LFGV, YGTM…TTFS, and VFYL…GAML. Positions 73 and 76 each coordinate Na(+).

Belongs to the fluoride channel Fluc/FEX (TC 1.A.43) family.

It is found in the cell inner membrane. The enzyme catalyses fluoride(in) = fluoride(out). Na(+) is not transported, but it plays an essential structural role and its presence is essential for fluoride channel function. Fluoride-specific ion channel. Important for reducing fluoride concentration in the cell, thus reducing its toxicity. In Brucella melitensis biotype 1 (strain ATCC 23456 / CCUG 17765 / NCTC 10094 / 16M), this protein is Fluoride-specific ion channel FluC 1.